A 379-amino-acid polypeptide reads, in one-letter code: Omega-3 fatty acid desaturase, endoplasmic reticulum (379 aa).

The chain crosses the membrane as a helical span at residues 52 to 72; sequence LSYVVRDVIFVATLIGIAIHL. The Histidine box-1 signature appears at 97–101; it reads HDCGH. A Histidine box-2 motif is present at residues 133–137; sequence HKTHH. Helical transmembrane passes span 213–233 and 236–256; these read TLCW…FGSL and FKIY…VTYL. The Histidine box-3 motif lies at 300 to 304; it reads HVIHH.

This sequence belongs to the fatty acid desaturase type 1 family.

It localises to the endoplasmic reticulum membrane. It functions in the pathway lipid metabolism; polyunsaturated fatty acid biosynthesis. In terms of biological role, ER (microsomal) omega-3 fatty acid desaturase introduces the third double bond in the biosynthesis of 18:3 fatty acids, important constituents of plant membranes. It is thought to use cytochrome b5 as an electron donor and to act on fatty acids esterified to phosphatidylcholine and, possibly, other phospholipids. The protein is Omega-3 fatty acid desaturase, endoplasmic reticulum (FAD3) of Nicotiana tabacum (Common tobacco).